The primary structure comprises 374 residues: 4-hydroxybenzoate polyprenyltransferase, mitochondrial (374 aa).

Residues 1 to 63 constitute a mitochondrion transit peptide; it reads MLRLGGAGLV…RALSLSAAAV (63 aa). Topologically, residues 64–83 are mitochondrial matrix; the sequence is VNSAPRPLQPYLRLMRLDKP. The helical transmembrane segment at 84 to 104 threads the bilayer; that stretch reads IGTWLLYLPCTWSIGLAADPG. The Mitochondrial intermembrane segment spans residues 105–108; that stretch reads CFPD. Residues 109-129 traverse the membrane as a helical segment; sequence WYMLSLFGTGAILMRGAGCTI. Residues 130-153 lie on the Mitochondrial matrix side of the membrane; that stretch reads NDMWDRDFDKKVERTANRPIAAGD. Residues 154–174 form a helical membrane-spanning segment; it reads ISAFQSFVFLGAQLTLALGVL. The Mitochondrial intermembrane portion of the chain corresponds to 175 to 176; that stretch reads LH. Residues 177 to 197 traverse the membrane as a helical segment; it reads LNYYSIAMGAASLLLVVTYPL. Residues 198-200 are Mitochondrial matrix-facing; sequence MKR. Residues 201–221 traverse the membrane as a helical segment; that stretch reads VTFWPQLALGLTFNWGALLGW. Topologically, residues 222 to 230 are mitochondrial intermembrane; that stretch reads SAVKGSCDP. Residues 231–251 form a helical membrane-spanning segment; the sequence is AVCLPLYFSGVMWTLIYDTIY. The Mitochondrial matrix segment spans residues 252–277; that stretch reads AHQDKKDDALIGLKSTALLFRENTKQ. Residues 278 to 298 traverse the membrane as a helical segment; the sequence is WLSGFGVAMVGALSLVGASSG. Topologically, residues 299–300 are mitochondrial intermembrane; the sequence is QT. Residues 301–321 traverse the membrane as a helical segment; the sequence is LPYYAAVAAVGAHLAHQIYTV. At 322-332 the chain is on the mitochondrial matrix side; that stretch reads DIHRAEDCWEK. A helical transmembrane segment spans residues 333–353; the sequence is FTSNRTVGLLLFLGIVLGNLY. At 354–374 the chain is on the mitochondrial intermembrane side; it reads KDKPDETKGVDAVGEESERTS.

Belongs to the UbiA prenyltransferase family. The cofactor is Mg(2+).

Its subcellular location is the mitochondrion inner membrane. It carries out the reaction an all-trans-polyprenyl diphosphate + 4-hydroxybenzoate = a 4-hydroxy-3-(all-trans-polyprenyl)benzoate + diphosphate. The enzyme catalyses all-trans-decaprenyl diphosphate + 4-hydroxybenzoate = 4-hydroxy-3-(all-trans-decaprenyl)benzoate + diphosphate. The catalysed reaction is all-trans-nonaprenyl diphosphate + 4-hydroxybenzoate = 4-hydroxy-3-(all-trans-nonaprenyl)benzoate + diphosphate. Its pathway is cofactor biosynthesis; ubiquinone biosynthesis. In terms of biological role, mediates the second step in the final reaction sequence of coenzyme Q (CoQ) biosynthesis. Catalyzes the prenylation of para-hydroxybenzoate (PHB) with an all-trans polyprenyl group (such as all-trans-nonaprenyl diphosphate). The length of the polyprenyl side chain varies depending on the species, in humans, the side chain is comprised of 10 isoprenyls producing CoQ10 (also known as ubiquinone), whereas rodents predominantly generate CoQ9. However, this specificity is not complete, human tissues have low amounts of CoQ9 and rodent organs contain some CoQ10. Plays a central role in the biosynthesis of CoQ9. CoQ9 is a vital molecule that transports electrons from mitochondrial respiratory chain complexes. CoQs also function as cofactors for uncoupling protein and plays a role as regulator of the extracellularly-induced ceramide-dependent apoptotic pathway. Regulates mitochondrial permeability transition pore (mPTP) opening and ROS production (pivotal events in cell death) in a tissue specific manner. This Rattus norvegicus (Rat) protein is 4-hydroxybenzoate polyprenyltransferase, mitochondrial.